The following is a 379-amino-acid chain: Probable G-protein coupled receptor No18 (379 aa).

Topologically, residues 5-36 are extracellular; the sequence is EASITGRTAPELNASAAPLDDERELGETVAAT. N-linked (GlcNAc...) asparagine glycosylation is present at Asn17. Residues 37–58 traverse the membrane as a helical segment; the sequence is ALLLAIILVTIVGNSLVIISVF. Over 59–68 the chain is Cytoplasmic; the sequence is TYRPLRSVQN. A helical membrane pass occupies residues 69–90; that stretch reads FFVVSLAVADLTVALFVLPLNV. Residues 91–107 lie on the Extracellular side of the membrane; that stretch reads AYRLLNQWLLGSYLCQM. An intrachain disulfide couples Cys105 to Cys184. A helical transmembrane segment spans residues 108–128; that stretch reads WLTCDILCCTSSILNLCVIAL. At 129 to 148 the chain is on the cytoplasmic side; the sequence is DRYWAITDPINYAQKRTIRR. The helical transmembrane segment at 149 to 171 threads the bilayer; that stretch reads VNTMIAAVWALSLVISVPPLLGW. At 172–196 the chain is on the extracellular side; sequence NDWPAQFTEDTPCTLTQERLFVVYS. Residues 197 to 218 traverse the membrane as a helical segment; sequence SSGSFFIPLIIMSVVYAKIFFA. Over 219–303 the chain is Cytoplasmic; that stretch reads TKRRLRERTR…LSKERKAARV (85 aa). The tract at residues 234 to 276 is disordered; it reads AVPAPPQRTSSRPLAELESVASQEDETEPSPEPEPLSSRADKP. Residues 304 to 325 traverse the membrane as a helical segment; that stretch reads LGVIMGVFVVCWLPFFLMYAIV. Over 326–340 the chain is Extracellular; that stretch reads PFCTNCAPPSQRVVD. Residues 341 to 362 traverse the membrane as a helical segment; it reads FVTWLGYVNSSLNPIIYTIYNK. The Cytoplasmic segment spans residues 363–375; sequence DFRTAFSRLLRCD.

The protein belongs to the G-protein coupled receptor 1 family.

The protein resides in the cell membrane. Its function is as follows. Probable G-protein coupled receptor for an amine. The protein is Probable G-protein coupled receptor No18 of Amphibalanus amphitrite (Striped barnacle).